The chain runs to 140 residues: uncharacterized protein (140 aa).

N-linked (GlcNAc...) asparagine glycosylation is present at Asn27. The next 3 helical transmembrane spans lie at 45–65 (FSLY…GVYA), 76–96 (VWIF…TGTV), and 116–136 (VPLC…YSMV).

It belongs to the TMEM170 family.

The protein localises to the membrane. This is an uncharacterized protein from Saccharomyces cerevisiae (strain ATCC 204508 / S288c) (Baker's yeast).